The sequence spans 429 residues: Acetylornithine aminotransferase (429 aa).

Residues 126–127 (GA) and F160 contribute to the pyridoxal 5'-phosphate site. Position 163 (R163) interacts with N(2)-acetyl-L-ornithine. A pyridoxal 5'-phosphate-binding site is contributed by 251-254 (DEVQ). N6-(pyridoxal phosphate)lysine is present on K280. S307 serves as a coordination point for N(2)-acetyl-L-ornithine. T308 is a pyridoxal 5'-phosphate binding site.

The protein belongs to the class-III pyridoxal-phosphate-dependent aminotransferase family. ArgD subfamily. In terms of assembly, homodimer. Pyridoxal 5'-phosphate is required as a cofactor.

Its subcellular location is the cytoplasm. The catalysed reaction is N(2)-acetyl-L-ornithine + 2-oxoglutarate = N-acetyl-L-glutamate 5-semialdehyde + L-glutamate. The protein operates within amino-acid biosynthesis; L-arginine biosynthesis; N(2)-acetyl-L-ornithine from L-glutamate: step 4/4. With respect to regulation, N-acetylornithine aminotransferase activity is stimulated by the addition of Mg(2+), Ca(2+) or Mn(2+), and inhibited by the addition of Zn(2+), Cu(2+), Co(2+) or Ni(2+). Functionally, catalyzes the reversible conversion of N-acetylornithine to N-acetylglutamate-5-semialdehyde. In vitro, also shows very low ornithine aminotransferase (OAT) and gamma-aminobutyrate aminotransferase (GABA-AT) activity, catalyzing the conversion of ornithine (Orn) to glutamate-5-semialdehyde and of gamma-aminobutyric acid (GABA) to succinate semialdehyde. It has been shown to function as a GABA-AT and contributes to closing the tricarboxylic acid cycle of Synechocystis sp. PCC6803 via the GABA shunt. However, the catalytic efficiency toward N-acetylornithine is 2500-fold and 10700-fold higher than that toward ornithine and gamma-aminobutyrate, respectively, indicating that the protein mainly functions as an N-acetylornithine aminotransferase. In Synechocystis sp. (strain ATCC 27184 / PCC 6803 / Kazusa), this protein is Acetylornithine aminotransferase.